Here is a 462-residue protein sequence, read N- to C-terminus: UPF0236 protein TTE2489 (462 aa).

This sequence belongs to the UPF0236 family.

This is UPF0236 protein TTE2489 from Caldanaerobacter subterraneus subsp. tengcongensis (strain DSM 15242 / JCM 11007 / NBRC 100824 / MB4) (Thermoanaerobacter tengcongensis).